A 423-amino-acid polypeptide reads, in one-letter code: UDP-N-acetylglucosamine 1-carboxyvinyltransferase (423 aa).

22–23 (KN) contributes to the phosphoenolpyruvate binding site. Residue Arg93 coordinates UDP-N-acetyl-alpha-D-glucosamine. Cys117 (proton donor) is an active-site residue. Cys117 is modified (2-(S-cysteinyl)pyruvic acid O-phosphothioketal). UDP-N-acetyl-alpha-D-glucosamine is bound by residues 122-126 (RPIDL), Asp307, and Val329.

This sequence belongs to the EPSP synthase family. MurA subfamily.

The protein localises to the cytoplasm. It carries out the reaction phosphoenolpyruvate + UDP-N-acetyl-alpha-D-glucosamine = UDP-N-acetyl-3-O-(1-carboxyvinyl)-alpha-D-glucosamine + phosphate. The protein operates within cell wall biogenesis; peptidoglycan biosynthesis. Functionally, cell wall formation. Adds enolpyruvyl to UDP-N-acetylglucosamine. This Chlorobium chlorochromatii (strain CaD3) protein is UDP-N-acetylglucosamine 1-carboxyvinyltransferase.